A 636-amino-acid chain; its full sequence is Transcriptional repressor CTCFL (636 aa).

Disordered stretches follow at residues 17 to 38 (KEQK…VQRV), 160 to 195 (ENPE…DKRE), and 222 to 257 (LEEQ…PQSF). A compositionally biased stretch (acidic residues) spans 160-170 (ENPELTPDLDE). Positions 242-251 (AKPKRRRQTK) are enriched in basic residues. C2H2-type zinc fingers lie at residues 257–279 (FQCD…IKIH), 285–307 (HLCH…VNTH), 313–336 (HKCR…RYKH), 342–364 (FKCS…IRSH), 370–392 (FQCC…MRTH), 398–421 (YECP…AQKH), 428–451 (YECP…RNLH), 458–480 (MKCR…QRTH), 486–508 (FKCK…MRMH), 514–537 (FSCL…RKYH), and 546–572 (HLCL…DPEH). Residues 562–624 (QRHRKKCDPE…AAGSQSPDHG (63 aa)) form a disordered region. Positions 568 to 583 (CDPEHETLAPNKDRRP) are enriched in basic and acidic residues.

The protein belongs to the CTCF zinc-finger protein family. As to quaternary structure, interacts with histones, PRMT7 and SETD1A. Interacts (via N-terminus) with BAG6/BAT3. As to expression, testis-specific.

The protein resides in the cytoplasm. It is found in the nucleus. Its function is as follows. Testis-specific DNA binding protein responsible for insulator function, nuclear architecture and transcriptional control, which probably acts by recruiting epigenetic chromatin modifiers. Plays a key role in gene imprinting in male germline, by participating in the establishment of differential methylation at the IGF2/H19 imprinted control region (ICR). Directly binds the unmethylated H19 ICR and recruits the PRMT7 methyltransferase, leading to methylate histone H4 'Arg-3' to form H4R3sme2. This probably leads to recruit de novo DNA methyltransferases at these sites. Seems to act as tumor suppressor. In association with DNMT1 and DNMT3B, involved in activation of BAG1 gene expression by binding to its promoter. Required for dimethylation of H3 lysine 4 (H3K4me2) of MYC and BRCA1 promoters. In Mus musculus (Mouse), this protein is Transcriptional repressor CTCFL (Ctcfl).